The primary structure comprises 619 residues: MSKSKCSVGPMSSVVAPAKEPNAVGPREVELILVKEQNGVQLTNSTLINPPQTPVEVQERETWSKKIDFLLSVIGFAVDLANVWRFPYLCYKNGGGAFLVPYLLFMVIAGMPLFYMELALGQFNREGAAGVWKICPVLKGVGFTVILISFYVGFFYNVIIAWALHYFFSSFTMDLPWIHCNNTWNSPNCSDAHSSNSSDGLGLNDTFGTTPAAEYFERGVLHLHQSRGIDDLGPPRWQLTACLVLVIVLLYFSLWKGVKTSGKVVWITATMPYVVLTALLLRGVTLPGAMDGIRAYLSVDFYRLCEASVWIDAATQVCFSLGVGFGVLIAFSSYNKFTNNCYRDAIITTSINSLTSFSSGFVVFSFLGYMAQKHNVPIRDVATDGPGLIFIIYPEAIATLPLSSAWAAVFFLMLLTLGIDSAMGGMESVITGLVDEFQLLHRHRELFTLGIVLATFLLSLFCVTNGGIYVFTLLDHFAAGTSILFGVLIEAIGVAWFYGVQQFSDDIKQMTGQRPNLYWRLCWKLVSPCFLLYVVVVSIVTFRPPHYGAYIFPDWANALGWIIATSSMAMVPIYATYKFCSLPGSFREKLAYAITPEKDRQLVDRGEVRQFTLRHWLLV.

The Cytoplasmic segment spans residues 1–56 (MSKSKCSVGPMSSVVAPAKEPNAVGPREVELILVKEQNGVQLTNSTLINPPQTPVE). A discontinuously helical membrane pass occupies residues 57–95 (VQERETWSKKIDFLLSVIGFAVDLANVWRFPYLCYKNGG). The Na(+) site is built by Gly75, Ala77, Val78, Asp79, and Asn82. Dopamine is bound at residue Asp79. 2 helical membrane-spanning segments follow: residues 96–127 (GAFL…NREG) and 128–171 (AAGV…FSSF). Ser149 and Gly153 together coordinate dopamine. At 172–235 (TMDLPWIHCN…SRGIDDLGPP (64 aa)) the chain is on the extracellular side. A disulfide bridge connects residues Cys180 and Cys189. Asn181, Asn188, Asn196, and Asn204 each carry an N-linked (GlcNAc...) asparagine glycan. The next 2 helical transmembrane spans lie at 236–255 (RWQL…FSLW) and 256–286 (KGVK…GVTL). Topologically, residues 287 to 305 (PGAMDGIRAYLSVDFYRLC) are extracellular. The discontinuously helical transmembrane segment at 306 to 334 (EASVWIDAATQVCFSLGVGFGVLIAFSSY) threads the bilayer. Gln316 provides a ligand contact to chloride. Position 319 (Phe319) interacts with dopamine. Ser320 and Asn352 together coordinate Na(+). Ser320 lines the chloride pocket. A helical transmembrane segment spans residues 335–375 (NKFTNNCYRDAIITTSINSLTSFSSGFVVFSFLGYMAQKHN). Ser356 is a binding site for chloride. The Extracellular segment spans residues 376–399 (VPIRDVATDGPGLIFIIYPEAIAT). 3 consecutive transmembrane segments (helical) span residues 400-441 (LPLS…QLLH), 442-465 (RHRE…CVTN), and 466-498 (GGIY…AWFY). Positions 417, 420, and 421 each coordinate Na(+). Ser421 and Ala422 together coordinate dopamine. The Cytoplasmic portion of the chain corresponds to 499 to 515 (GVQQFSDDIKQMTGQRP). Residues 516 to 541 (NLYWRLCWKLVSPCFLLYVVVVSIVT) traverse the membrane as a helical segment. The Extracellular segment spans residues 542–552 (FRPPHYGAYIF). The helical transmembrane segment at 553–582 (PDWANALGWIIATSSMAMVPIYATYKFCSL) threads the bilayer. The segment at 560–589 (GWIIATSSMAMVPIYATYKFCSLPGSFREK) is interaction with TGFB1I1. Topologically, residues 583–619 (PGSFREKLAYAITPEKDRQLVDRGEVRQFTLRHWLLV) are cytoplasmic.

The protein belongs to the sodium:neurotransmitter symporter (SNF) (TC 2.A.22) family. SLC6A3 subfamily. In terms of assembly, monomer. Homooligomer; disulfide-linked. Interacts with PRKCABP and TGFB1I1. Interacts (via N-terminus) with SYNGR3 (via N-terminus). Interacts with SLC18A2. Interacts with TOR1A (ATP-bound); TOR1A regulates SLC6A3 subcellular location. Interacts with alpha-synuclein/SNCA. Interacts with SEPTIN4. In terms of tissue distribution, found in the substantia nigra and ventral tegmental dopamine neurons, in fibers of the medial forebrain bundle ascending into the striatum, and within dense fiber networks and varicosities in the dorsal and ventral striatum (at protein level). Lower expression in the cortex (at protein level). Absent from the corpus callosum. Expressed throughout the retina at postnatal day 8.

It is found in the cell membrane. The protein localises to the cell projection. The protein resides in the neuron projection. Its subcellular location is the axon. The catalysed reaction is dopamine(out) + chloride(out) + Na(+)(out) = dopamine(in) + chloride(in) + Na(+)(in). It catalyses the reaction (R)-noradrenaline(out) + chloride(out) + Na(+)(out) = (R)-noradrenaline(in) + chloride(in) + Na(+)(in). It carries out the reaction dopamine(out) + chloride(out) + 2 Na(+)(out) = dopamine(in) + chloride(in) + 2 Na(+)(in). Its activity is regulated as follows. Inhibited by amphetamine, bupropion, cocaine and ritalin. Inhibited by zinc ions. Its function is as follows. Mediates sodium- and chloride-dependent transport of dopamine. Also mediates sodium- and chloride-dependent transport of norepinephrine (also known as noradrenaline). Regulator of light-dependent retinal hyaloid vessel regression, downstream of OPN5 signaling. The chain is Sodium-dependent dopamine transporter (Slc6a3) from Mus musculus (Mouse).